A 268-amino-acid chain; its full sequence is Small ribosomal subunit protein eS1 (268 aa).

The disordered stretch occupies residues 1-21 (MAVGKNKGLSKGGKKGGKKKV).

It belongs to the eukaryotic ribosomal protein eS1 family. As to quaternary structure, component of the small ribosomal subunit. Mature ribosomes consist of a small (40S) and a large (60S) subunit. The 40S subunit contains about 33 different proteins and 1 molecule of RNA (18S). The 60S subunit contains about 49 different proteins and 3 molecules of RNA (28S, 5.8S and 5S).

It localises to the cytoplasm. Functionally, essential for oogenesis; required for late follicle cell development. The chain is Small ribosomal subunit protein eS1 from Drosophila sechellia (Fruit fly).